Consider the following 255-residue polypeptide: tRNA (guanine-N(7)-)-methyltransferase (255 aa).

The S-adenosyl-L-methionine site is built by Glu-64, Glu-89, Asp-116, and Asp-138. Asp-138 is a catalytic residue. Substrate-binding positions include Lys-142, Asp-174, and 212–215 (TRYE).

Belongs to the class I-like SAM-binding methyltransferase superfamily. TrmB family.

The catalysed reaction is guanosine(46) in tRNA + S-adenosyl-L-methionine = N(7)-methylguanosine(46) in tRNA + S-adenosyl-L-homocysteine. Its pathway is tRNA modification; N(7)-methylguanine-tRNA biosynthesis. Catalyzes the formation of N(7)-methylguanine at position 46 (m7G46) in tRNA. This is tRNA (guanine-N(7)-)-methyltransferase from Rhodospirillum rubrum (strain ATCC 11170 / ATH 1.1.1 / DSM 467 / LMG 4362 / NCIMB 8255 / S1).